Here is a 399-residue protein sequence, read N- to C-terminus: MALTRRAAVMRGVENAVTGHNTKAKVQVTGKRAVLEEIGNKVARGSNVPKKTDCIKPPVKATKGPGKMTNTVVPPKPPAAVNQAVKDTTTASKVLSPVPMDVSMQEEDLCQAFSDVLLHNIEDIDADDSGNPQLCSDYVKDIYLYLRQLELQQSVRPHYLDGKTINGRMRAILVDWLVQVHSRFQLLQETLYMCVAVMDRFLQSHPVPRKRLQLVGVTALLLASKYEEMYSPDIADFVYITDNAYNSAEVREMEITILKELNFDLGRPLPLHFLRRASKAGEADAEQHTLAKYLMELTLIDYDMVHYHPSEIAAAALCLSQKVLGHDKWGTKQQYYTGYAEDSLAMTMKHMAKNVVKVNENLTKYTAVRNKYASSKLLRISTISQLNSKTIKDLAASLL.

Positions 58–78 (PVKATKGPGKMTNTVVPPKPP) are disordered.

The protein belongs to the cyclin family. Cyclin AB subfamily. As to quaternary structure, interacts with the CDK1 protein kinase to form a serine/threonine kinase holoenzyme complex also known as maturation promoting factor (MPF). The cyclin subunit imparts substrate specificity to the complex.

In terms of biological role, essential for the control of the cell cycle at the G2/M (mitosis) transition. This Gallus gallus (Chicken) protein is G2/mitotic-specific cyclin-B2 (CCNB2).